Here is a 3391-residue protein sequence, read N- to C-terminus: Genome polyprotein (3391 aa).

Residues 1–15 (MNNQRKKTARPSFNM) are interaction with host EXOC1. The Cytoplasmic portion of the chain corresponds to 1 to 101 (MNNQRKKTAR…LNIMNRRKRS (101 aa)). Residues 37-72 (LLSGQGPMKLVMAFIAFLRFLAIPPTAGILARWGSF) form a hydrophobic; homodimerization of capsid protein C region. The propeptide at 101–114 (SVTMLLMLLPTALA) is ER anchor for the capsid protein C, removed in mature form by serine protease NS3. Residues 102–119 (VTMLLMLLPTALAFHLTT) traverse the membrane as a helical segment. Over 120 to 242 (RGGEPHMIVS…QIQRVETWAL (123 aa)) the chain is Extracellular. N-linked (GlcNAc...) asparagine; by host glycosylation is present at N183. The chain crosses the membrane as a helical span at residues 243 to 260 (RHPGFTVIALFLAHAIGT). S261 is a topological domain (cytoplasmic). Residues 262–280 (ITQKGIIFILLMLVTPSMA) traverse the membrane as a helical segment. Over 281–725 (MRCVGIGSRD…HQVFGTAYGV (445 aa)) the chain is Extracellular. Disulfide bonds link C283–C310, C340–C401, C354–C385, and C372–C396. N-linked (GlcNAc...) asparagine; by host glycosylation is present at N347. A fusion peptide region spans residues 378 to 391 (DRGWGNGCGLFGKG). A glycan (N-linked (GlcNAc...) asparagine; by host) is linked at N433. 2 disulfide bridges follow: C465-C565 and C582-C613. A helical membrane pass occupies residues 726–746 (LFSGVSWTMKIGIGILLTWLG). Residues 747–752 (LNSRST) lie on the Cytoplasmic side of the membrane. Residues 753-773 (SLSMTCIAVGMVTLYLGVMVQ) form a helical membrane-spanning segment. At 774-1198 (ADSGCVINWK…NASDRMGMGT (425 aa)) the chain is on the extracellular side. 6 disulfides stabilise this stretch: C778-C789, C829-C917, C953-C997, C1054-C1103, C1065-C1087, and C1086-C1090. N-linked (GlcNAc...) asparagine; by host glycosylation is found at N904 and N981. A glycan (N-linked (GlcNAc...) asparagine; by host) is linked at N1189. Residues 1199-1219 (TYLALMATFKMRPMFAVGLLF) traverse the membrane as a helical segment. Residues 1220–1225 (RRLTSR) are Cytoplasmic-facing. Residues 1226–1244 (EVLLLTIGLSLVASVELPN) form a helical membrane-spanning segment. Residues 1245–1268 (SLEELGDGLAMGIMILKLLTDFQS) are Lumenal-facing. Residues 1269–1289 (HQLWATLLSLTFVKTTFSLHY) form a helical membrane-spanning segment. Position 1290 (A1290) is a topological domain, cytoplasmic. Residues 1291-1309 (WKTMAMVLSIVSLFPLCLS) form a helical membrane-spanning segment. Topologically, residues 1310 to 1314 (TTSQK) are lumenal. Residues 1315-1335 (TTWLPVLLGSLGCKPLTMFLI) form a helical membrane-spanning segment. Residues 1336–1345 (AENKIWGRKS) lie on the Cytoplasmic side of the membrane. The helical transmembrane segment at 1346–1366 (WPLNEGIMAVGIVSILLSSLL) threads the bilayer. Residues 1367–1369 (KND) are Lumenal-facing. A helical membrane pass occupies residues 1370-1390 (VPLAGPLIAGGMLIACYVISG). Residues 1391–1446 (SSADLSLEKAAEVSWEEEAEHSGASHNILVEVQDDGTMKIKDEERDDTLTILLKAT) lie on the Cytoplasmic side of the membrane. The segment at 1397-1436 (LEKAAEVSWEEEAEHSGASHNILVEVQDDGTMKIKDEERD) is interacts with and activates NS3 protease. An intramembrane region (helical) is located at residues 1447–1467 (LLAVSGVYPLSIPATLFVWYF). Residues 1468–2147 (WQKKKQRSGV…MEELPDTIET (680 aa)) are Cytoplasmic-facing. A Peptidase S7 domain is found at 1475 to 1652 (SGVLWDTPSP…KASQEGPLPE (178 aa)). Active-site charge relay system; for serine protease NS3 activity residues include H1525, D1549, and S1609. Positions 1655–1811 (DEVFRKRNLT…QSNAVIQDEE (157 aa)) constitute a Helicase ATP-binding domain. Residues 1659-1662 (RKRN) are important for RNA-binding. 1668–1675 (LHPGSGKT) is a binding site for ATP. Positions 1759–1762 (DEAH) match the DEAH box motif. The Helicase C-terminal domain occupies 1821–1988 (SGYEWITDFP…IIPALFEPER (168 aa)). At K1863 the chain carries N6-acetyllysine; by host. A helical membrane pass occupies residues 2148 to 2168 (LMLLALIAVLTGGVTLFFLSG). At 2169 to 2170 (KG) the chain is on the lumenal side. The segment at residues 2171 to 2191 (LGKTSIGLLCVMASSVLLWMA) is an intramembrane region (helical). Residue S2192 is a topological domain, lumenal. Residues 2193-2213 (VEPHWIAASIILEFFLMVLLI) form a helical membrane-spanning segment. Over 2214–2228 (PEPDRQRTPQDNQLA) the chain is Cytoplasmic. The chain crosses the membrane as a helical span at residues 2229–2249 (YVVIGLLFMILTVAANEMGLL). Topologically, residues 2250 to 2275 (ETTKKDLGIGHVAAENHHHATMLDVD) are lumenal. Residues 2276–2296 (LRPASAWTLYAVATTVITPMM) constitute an intramembrane region (helical). The Lumenal segment spans residues 2297-2348 (RHTIENTTANISLTAIANQAAILMGLDKGWPISKMDIGVPLLALGCYSQVNP). N-linked (GlcNAc...) asparagine; by host glycosylation is found at N2302 and N2306. A helical transmembrane segment spans residues 2349–2369 (LTLTAAVLMLVAHYAIIGPGL). At 2370–2414 (QAKATREAQKRTAAGIMKNPTVDGIVAIDLDPVVYDAKFEKQLGQ) the chain is on the cytoplasmic side. Residues 2415-2435 (IMLLILCTSQILLMRTTWALC) traverse the membrane as a helical segment. Residues 2436-2460 (ESITLATGPLTTLWEGSPGKFWNTT) lie on the Lumenal side of the membrane. The N-linked (GlcNAc...) asparagine; by host glycan is linked to N2458. The chain crosses the membrane as a helical span at residues 2461–2481 (IAVSMANIFRGSYLAGAGLAF). Residues 2482 to 3391 (SLMKSLGGGR…NESDPEGALW (910 aa)) lie on the Cytoplasmic side of the membrane. Residues 2494 to 2755 (TGAKGKHWER…DVDLGAGTRH (262 aa)) enclose the mRNA cap 0-1 NS5-type MT domain. Residue S2548 participates in S-adenosyl-L-methionine binding. Phosphoserine is present on S2548. Catalysis depends on K2553, which acts as the For 2'-O-MTase activity. The SUMO-interacting motif signature appears at 2569-2572 (VIDL). G2578, W2579, T2596, K2597, D2623, and V2624 together coordinate S-adenosyl-L-methionine. The For 2'-O-MTase activity role is filled by D2638. I2639 lines the S-adenosyl-L-methionine pocket. Residues K2672 and E2708 each act as for 2'-O-MTase activity in the active site. Y2710 is an S-adenosyl-L-methionine binding site. Zn(2+)-binding residues include E2929, H2933, C2938, and C2941. The 150-residue stretch at 3019 to 3168 (GNMYADDTAG…KPIDDRFATA (150 aa)) folds into the RdRp catalytic domain. Positions 3203, 3219, and 3338 each coordinate Zn(2+).

In the N-terminal section; belongs to the class I-like SAM-binding methyltransferase superfamily. mRNA cap 0-1 NS5-type methyltransferase family. As to quaternary structure, homodimer. Interacts (via N-terminus) with host EXOC1 (via C-terminus); this interaction results in EXOC1 degradation through the proteasome degradation pathway. In terms of assembly, forms heterodimers with envelope protein E in the endoplasmic reticulum and Golgi. Homodimer; in the endoplasmic reticulum and Golgi. Interacts with protein prM. Interacts with non-structural protein 1. As to quaternary structure, homodimer; Homohexamer when secreted. Interacts with envelope protein E. In terms of assembly, interacts (via N-terminus) with serine protease NS3. Forms a heterodimer with serine protease NS3. May form homooligomers. As to quaternary structure, forms a heterodimer with NS2B. Interacts with NS4B. Interacts with unphosphorylated RNA-directed RNA polymerase NS5; this interaction stimulates RNA-directed RNA polymerase NS5 guanylyltransferase activity. Interacts with host SHFL. In terms of assembly, interacts with host MAVS; this interaction inhibits the synthesis of IFN-beta. Interacts with host SHFL. Interacts with host AUP1; the interaction occurs in the presence of Dengue virus NS4B and induces lipophagy which facilitates production of virus progeny particles. Interacts with serine protease NS3. As to quaternary structure, homodimer. Interacts with host STAT2; this interaction inhibits the phosphorylation of the latter, and, when all viral proteins are present (polyprotein), targets STAT2 for degradation. Interacts with serine protease NS3. Post-translationally, specific enzymatic cleavages in vivo yield mature proteins. Cleavages in the lumen of endoplasmic reticulum are performed by host signal peptidase, whereas cleavages in the cytoplasmic side are performed by serine protease NS3. Signal cleavage at the 2K-4B site requires a prior NS3 protease-mediated cleavage at the 4A-2K site. In terms of processing, cleaved in post-Golgi vesicles by a host furin, releasing the mature small envelope protein M, and peptide pr. This cleavage is incomplete as up to 30% of viral particles still carry uncleaved prM. N-glycosylated. Post-translationally, N-glycosylated. The excreted form is glycosylated and this is required for efficient secretion of the protein from infected cells. In terms of processing, acetylated by host KAT5. Acetylation modulates NS3 RNA-binding and unwinding activities and plays an important positive role for viral replication. Sumoylation of RNA-directed RNA polymerase NS5 increases NS5 protein stability allowing proper viral RNA replication. Post-translationally, phosphorylated on serines residues. This phosphorylation may trigger NS5 nuclear localization.

The protein localises to the virion. It is found in the host nucleus. Its subcellular location is the host cytoplasm. It localises to the host perinuclear region. The protein resides in the secreted. The protein localises to the virion membrane. It is found in the host endoplasmic reticulum membrane. Its subcellular location is the host mitochondrion. It carries out the reaction Selective hydrolysis of -Xaa-Xaa-|-Yaa- bonds in which each of the Xaa can be either Arg or Lys and Yaa can be either Ser or Ala.. The enzyme catalyses RNA(n) + a ribonucleoside 5'-triphosphate = RNA(n+1) + diphosphate. It catalyses the reaction a ribonucleoside 5'-triphosphate + H2O = a ribonucleoside 5'-diphosphate + phosphate + H(+). The catalysed reaction is ATP + H2O = ADP + phosphate + H(+). It carries out the reaction a 5'-end (5'-triphosphoguanosine)-ribonucleoside in mRNA + S-adenosyl-L-methionine = a 5'-end (N(7)-methyl 5'-triphosphoguanosine)-ribonucleoside in mRNA + S-adenosyl-L-homocysteine. The enzyme catalyses a 5'-end (N(7)-methyl 5'-triphosphoguanosine)-ribonucleoside in mRNA + S-adenosyl-L-methionine = a 5'-end (N(7)-methyl 5'-triphosphoguanosine)-(2'-O-methyl-ribonucleoside) in mRNA + S-adenosyl-L-homocysteine + H(+). Plays a role in virus budding by binding to the cell membrane and gathering the viral RNA into a nucleocapsid that forms the core of a mature virus particle. During virus entry, may induce genome penetration into the host cytoplasm after hemifusion induced by the surface proteins. Can migrate to the cell nucleus where it modulates host functions. Overcomes the anti-viral effects of host EXOC1 by sequestering and degrading the latter through the proteasome degradation pathway. Functionally, inhibits RNA silencing by interfering with host Dicer. In terms of biological role, prevents premature fusion activity of envelope proteins in trans-Golgi by binding to envelope protein E at pH6.0. After virion release in extracellular space, gets dissociated from E dimers. Its function is as follows. Acts as a chaperone for envelope protein E during intracellular virion assembly by masking and inactivating envelope protein E fusion peptide. prM is the only viral peptide matured by host furin in the trans-Golgi network probably to avoid catastrophic activation of the viral fusion activity in acidic Golgi compartment prior to virion release. prM-E cleavage is inefficient, and many virions are only partially matured. These uncleaved prM would play a role in immune evasion. May play a role in virus budding. Exerts cytotoxic effects by activating a mitochondrial apoptotic pathway through M ectodomain. May display a viroporin activity. Functionally, binds to host cell surface receptor and mediates fusion between viral and cellular membranes. Envelope protein is synthesized in the endoplasmic reticulum in the form of heterodimer with protein prM. They play a role in virion budding in the ER, and the newly formed immature particle is covered with 60 spikes composed of heterodimer between precursor prM and envelope protein E. The virion is transported to the Golgi apparatus where the low pH causes dissociation of PrM-E heterodimers and formation of E homodimers. prM-E cleavage is inefficient, and many virions are only partially matured. These uncleaved prM would play a role in immune evasion. In terms of biological role, involved in immune evasion, pathogenesis and viral replication. Once cleaved off the polyprotein, is targeted to three destinations: the viral replication cycle, the plasma membrane and the extracellular compartment. Essential for viral replication. Required for formation of the replication complex and recruitment of other non-structural proteins to the ER-derived membrane structures. Excreted as a hexameric lipoparticle that plays a role against host immune response. Antagonizing the complement function. Binds to the host macrophages and dendritic cells. Inhibits signal transduction originating from Toll-like receptor 3 (TLR3). Its function is as follows. Disrupts the host endothelial glycocalyx layer of host pulmonary microvascular endothelial cells, inducing degradation of sialic acid and shedding of heparan sulfate proteoglycans. NS1 induces expression of sialidases, heparanase, and activates cathepsin L, which activates heparanase via enzymatic cleavage. These effects are probably linked to the endothelial hyperpermeability observed in severe dengue disease. Component of the viral RNA replication complex that functions in virion assembly and antagonizes the host immune response. Functionally, required cofactor for the serine protease function of NS3. May have membrane-destabilizing activity and form viroporins. In terms of biological role, displays three enzymatic activities: serine protease, NTPase and RNA c. NS3 serine protease, in association with NS2B, performs its autocleavage and cleaves the polyprotein at dibasic sites in the cytoplasm: C-prM, NS2A-NS2B, NS2B-NS3, NS3-NS4A, NS4A-2K and NS4B-NS5. NS3 RNA helicase binds RNA and unwinds dsRNA in the 3' to 5' direction. Its function is as follows. Regulates the ATPase activity of the NS3 helicase activity. NS4A allows NS3 helicase to conserve energy during unwinding. Plays a role in the inhibition of the host innate immune response. Interacts with host MAVS and thereby prevents the interaction between RIGI and MAVS. In turn, IFN-beta production is impaired. Interacts with host AUP1 which mediates induction of lipophagy in host cells and facilitates production of virus progeny particles. Functions as a signal peptide for NS4B and is required for the interferon antagonism activity of the latter. Functionally, induces the formation of ER-derived membrane vesicles where the viral replication takes place. Inhibits interferon (IFN)-induced host STAT1 phosphorylation and nuclear translocation, thereby preventing the establishment of cellular antiviral state by blocking the IFN-alpha/beta pathway. In terms of biological role, replicates the viral (+) and (-) RNA genome, and performs the capping of genomes in the cytoplasm. NS5 methylates viral RNA cap at guanine N-7 and ribose 2'-O positions. Besides its role in RNA genome replication, also prevents the establishment of cellular antiviral state by blocking the interferon-alpha/beta (IFN-alpha/beta) signaling pathway. Inhibits host TYK2 and STAT2 phosphorylation, thereby preventing activation of JAK-STAT signaling pathway. This is Genome polyprotein from Aedes aegypti (Yellowfever mosquito).